Here is a 213-residue protein sequence, read N- to C-terminus: MSKLSDIRREYSLGDLHRDALPDEPMSLFSKWMEEARDSELLSDPTAMSIATVDESGQPFQRIVLLKRFSEEGFVFFTNLESRKSQQIAHNAKVSLLFPWHSLERQVAITGEAEALSTADVMKYFITRPKESQIAAWVSQQSSKISARQVLETKYAEMKAKFSKGEVPLPKFWGGYLVKPSSIEFWQGGERRLHDRFLYDKGQSGWDISRLAP.

Residues 8–11 (RREY) and Lys67 each bind substrate. FMN is bound by residues 62–67 (RIVLLK), 77–78 (FT), Arg83, Lys84, and Gln106. Positions 124, 128, and 132 each coordinate substrate. FMN is bound by residues 141 to 142 (QS) and Trp186. 192-194 (RLH) lines the substrate pocket. An FMN-binding site is contributed by Arg196.

This sequence belongs to the pyridoxamine 5'-phosphate oxidase family. Homodimer. The cofactor is FMN.

The enzyme catalyses pyridoxamine 5'-phosphate + O2 + H2O = pyridoxal 5'-phosphate + H2O2 + NH4(+). It carries out the reaction pyridoxine 5'-phosphate + O2 = pyridoxal 5'-phosphate + H2O2. It functions in the pathway cofactor metabolism; pyridoxal 5'-phosphate salvage; pyridoxal 5'-phosphate from pyridoxamine 5'-phosphate: step 1/1. The protein operates within cofactor metabolism; pyridoxal 5'-phosphate salvage; pyridoxal 5'-phosphate from pyridoxine 5'-phosphate: step 1/1. In terms of biological role, catalyzes the oxidation of either pyridoxine 5'-phosphate (PNP) or pyridoxamine 5'-phosphate (PMP) into pyridoxal 5'-phosphate (PLP). This Shewanella woodyi (strain ATCC 51908 / MS32) protein is Pyridoxine/pyridoxamine 5'-phosphate oxidase.